The following is a 312-amino-acid chain: Malate dehydrogenase (312 aa).

Residues 12–17 and aspartate 36 contribute to the NAD(+) site; that span reads GSGFTG. Residues arginine 87 and arginine 93 each coordinate substrate. NAD(+) contacts are provided by residues asparagine 100 and 123–125; that span reads LTN. Asparagine 125 is a binding site for substrate. Serine 149 bears the Phosphoserine mark. Position 156 (arginine 156) interacts with substrate. The active-site Proton acceptor is histidine 180.

This sequence belongs to the LDH/MDH superfamily. MDH type 3 family.

The enzyme catalyses (S)-malate + NAD(+) = oxaloacetate + NADH + H(+). In terms of biological role, catalyzes the reversible oxidation of malate to oxaloacetate. This is Malate dehydrogenase from Oceanobacillus iheyensis (strain DSM 14371 / CIP 107618 / JCM 11309 / KCTC 3954 / HTE831).